The primary structure comprises 362 residues: 3-dehydroquinate synthase (362 aa).

NAD(+) contacts are provided by residues 70-75 (EGEQYK), 104-108 (GVIGD), 128-129 (TT), Lys141, Lys150, and 168-171 (TLTT). Positions 183, 246, and 263 each coordinate Zn(2+).

Belongs to the sugar phosphate cyclases superfamily. Dehydroquinate synthase family. Co(2+) serves as cofactor. Requires Zn(2+) as cofactor. The cofactor is NAD(+).

It is found in the cytoplasm. The catalysed reaction is 7-phospho-2-dehydro-3-deoxy-D-arabino-heptonate = 3-dehydroquinate + phosphate. It functions in the pathway metabolic intermediate biosynthesis; chorismate biosynthesis; chorismate from D-erythrose 4-phosphate and phosphoenolpyruvate: step 2/7. Functionally, catalyzes the conversion of 3-deoxy-D-arabino-heptulosonate 7-phosphate (DAHP) to dehydroquinate (DHQ). In Histophilus somni (strain 129Pt) (Haemophilus somnus), this protein is 3-dehydroquinate synthase.